Here is a 236-residue protein sequence, read N- to C-terminus: Phosphoribosylaminoimidazole-succinocarboxamide synthase (236 aa).

The protein belongs to the SAICAR synthetase family.

The catalysed reaction is 5-amino-1-(5-phospho-D-ribosyl)imidazole-4-carboxylate + L-aspartate + ATP = (2S)-2-[5-amino-1-(5-phospho-beta-D-ribosyl)imidazole-4-carboxamido]succinate + ADP + phosphate + 2 H(+). The protein operates within purine metabolism; IMP biosynthesis via de novo pathway; 5-amino-1-(5-phospho-D-ribosyl)imidazole-4-carboxamide from 5-amino-1-(5-phospho-D-ribosyl)imidazole-4-carboxylate: step 1/2. This chain is Phosphoribosylaminoimidazole-succinocarboxamide synthase, found in Campylobacter jejuni subsp. jejuni serotype O:2 (strain ATCC 700819 / NCTC 11168).